A 659-amino-acid polypeptide reads, in one-letter code: Biosynthetic arginine decarboxylase 2 (659 aa).

Position 119 is an N6-(pyridoxal phosphate)lysine (K119). L311–Y321 provides a ligand contact to substrate.

This sequence belongs to the Orn/Lys/Arg decarboxylase class-II family. SpeA subfamily. Requires Mg(2+) as cofactor. The cofactor is pyridoxal 5'-phosphate.

It carries out the reaction L-arginine + H(+) = agmatine + CO2. Its function is as follows. Catalyzes the biosynthesis of agmatine from arginine. In Synechocystis sp. (strain ATCC 27184 / PCC 6803 / Kazusa), this protein is Biosynthetic arginine decarboxylase 2 (speA2).